The following is a 356-amino-acid chain: Xylose/arabinose import permease protein XylH (356 aa).

10 consecutive transmembrane segments (helical) span residues 14 to 34, 41 to 61, 70 to 90, 96 to 116, 126 to 146, 161 to 181, 211 to 231, 242 to 262, 266 to 286, and 287 to 307; these read LFLVNVIIALFFYFENSAYFS, IFQYLAEIGIIAIGEAMLMLC, ALANFVPLITLTIYNSIYQAI, IVVSILLSLGLASLIGLMNGL, LITTVGTLFLFNGIALIYSGG, VSILPVPFIWSLGALVFLILL, VKIINFIIMANIGALVGIIQG, FTADVVLEGIAAAVIGGTSLV, GSLVGAFLGSVFISELLNGFN, and ILGINAYEFDAILGGAIVVVM.

The protein belongs to the binding-protein-dependent transport system permease family. As to quaternary structure, the complex is composed of two ATP-binding proteins (XylG), two transmembrane proteins (XylH) and a solute-binding protein (XylF).

The protein resides in the cell membrane. In terms of biological role, part of the ABC transporter complex XylFGH involved in the uptake of xylose and arabinose. Responsible for the translocation of the substrate across the membrane. The polypeptide is Xylose/arabinose import permease protein XylH (Sulfolobus acidocaldarius (strain ATCC 33909 / DSM 639 / JCM 8929 / NBRC 15157 / NCIMB 11770)).